The following is a 354-amino-acid chain: Ferrochelatase (354 aa).

His-204 and Glu-306 together coordinate Fe cation.

This sequence belongs to the ferrochelatase family.

It localises to the cytoplasm. The catalysed reaction is heme b + 2 H(+) = protoporphyrin IX + Fe(2+). Its pathway is porphyrin-containing compound metabolism; protoheme biosynthesis; protoheme from protoporphyrin-IX: step 1/1. Functionally, catalyzes the ferrous insertion into protoporphyrin IX. This is Ferrochelatase from Coxiella burnetii (strain CbuK_Q154) (Coxiella burnetii (strain Q154)).